Consider the following 182-residue polypeptide: uncharacterized protein (182 aa).

This sequence belongs to the mimivirus L28/L54 family.

This is an uncharacterized protein from Acanthamoeba polyphaga (Amoeba).